A 247-amino-acid polypeptide reads, in one-letter code: Type III pantothenate kinase (247 aa).

6–13 (DVGNTSIY) contributes to the ATP binding site. 102 to 105 (GADL) contributes to the substrate binding site. Aspartate 104 acts as the Proton acceptor in catalysis. K(+) is bound at residue aspartate 122. Threonine 125 is an ATP binding site. Threonine 176 is a binding site for substrate.

It belongs to the type III pantothenate kinase family. In terms of assembly, homodimer. Requires NH4(+) as cofactor. The cofactor is K(+).

The protein localises to the cytoplasm. The catalysed reaction is (R)-pantothenate + ATP = (R)-4'-phosphopantothenate + ADP + H(+). Its pathway is cofactor biosynthesis; coenzyme A biosynthesis; CoA from (R)-pantothenate: step 1/5. Functionally, catalyzes the phosphorylation of pantothenate (Pan), the first step in CoA biosynthesis. The protein is Type III pantothenate kinase of Acholeplasma laidlawii (strain PG-8A).